The sequence spans 293 residues: 33 kDa chaperonin (293 aa).

2 cysteine pairs are disulfide-bonded: cysteine 238/cysteine 240 and cysteine 271/cysteine 274.

The protein belongs to the HSP33 family. In terms of processing, under oxidizing conditions two disulfide bonds are formed involving the reactive cysteines. Under reducing conditions zinc is bound to the reactive cysteines and the protein is inactive.

It is found in the cytoplasm. Its function is as follows. Redox regulated molecular chaperone. Protects both thermally unfolding and oxidatively damaged proteins from irreversible aggregation. Plays an important role in the bacterial defense system toward oxidative stress. In Staphylococcus epidermidis (strain ATCC 35984 / DSM 28319 / BCRC 17069 / CCUG 31568 / BM 3577 / RP62A), this protein is 33 kDa chaperonin.